A 323-amino-acid polypeptide reads, in one-letter code: Arginase (323 aa).

Positions 119, 142, 144, and 146 each coordinate Mn(2+). Residues 144 to 148, 155 to 157, and Asp-198 contribute to the substrate site; these read HADIN and SKN. Mn(2+) is bound by residues Asp-247 and Asp-249. Substrate is bound by residues Thr-261 and Glu-292.

The protein belongs to the arginase family. As to quaternary structure, homotrimer. Mn(2+) is required as a cofactor.

It carries out the reaction L-arginine + H2O = urea + L-ornithine. Its pathway is nitrogen metabolism; urea cycle; L-ornithine and urea from L-arginine: step 1/1. The polypeptide is Arginase (car1) (Schizosaccharomyces pombe (strain 972 / ATCC 24843) (Fission yeast)).